The sequence spans 490 residues: Cysteine--tRNA ligase (490 aa).

Cys43 is a Zn(2+) binding site. Positions 45–55 (MTVQSSPHLGH) match the 'HIGH' region motif. A disordered region spans residues 177 to 204 (VDEMSPAEDSDPRGKRDPRDFALWKGHK). Residues 186 to 204 (SDPRGKRDPRDFALWKGHK) are compositionally biased toward basic and acidic residues. Residues Cys228, His253, and Glu257 each coordinate Zn(2+). Residues 284 to 288 (KMSKS) carry the 'KMSKS' region motif. ATP is bound at residue Lys287.

Belongs to the class-I aminoacyl-tRNA synthetase family. In terms of assembly, monomer. Zn(2+) is required as a cofactor.

The protein resides in the cytoplasm. The enzyme catalyses tRNA(Cys) + L-cysteine + ATP = L-cysteinyl-tRNA(Cys) + AMP + diphosphate. This chain is Cysteine--tRNA ligase, found in Cutibacterium acnes (strain DSM 16379 / KPA171202) (Propionibacterium acnes).